The chain runs to 292 residues: Ribosomal RNA small subunit methyltransferase I (292 aa).

This sequence belongs to the methyltransferase superfamily. RsmI family.

The protein localises to the cytoplasm. It catalyses the reaction cytidine(1402) in 16S rRNA + S-adenosyl-L-methionine = 2'-O-methylcytidine(1402) in 16S rRNA + S-adenosyl-L-homocysteine + H(+). In terms of biological role, catalyzes the 2'-O-methylation of the ribose of cytidine 1402 (C1402) in 16S rRNA. The sequence is that of Ribosomal RNA small subunit methyltransferase I from Buchnera aphidicola subsp. Baizongia pistaciae (strain Bp).